A 103-amino-acid chain; its full sequence is Large ribosomal subunit protein uL24 (103 aa).

The protein belongs to the universal ribosomal protein uL24 family. As to quaternary structure, part of the 50S ribosomal subunit.

Its function is as follows. One of two assembly initiator proteins, it binds directly to the 5'-end of the 23S rRNA, where it nucleates assembly of the 50S subunit. One of the proteins that surrounds the polypeptide exit tunnel on the outside of the subunit. The chain is Large ribosomal subunit protein uL24 from Enterococcus faecalis (strain ATCC 700802 / V583).